A 67-amino-acid chain; its full sequence is ATP synthase F(0) complex subunit 8 (67 aa).

The helical transmembrane segment at 8–24 (TWFTTILATITTLFILF) threads the bilayer. Lys54 is subject to N6-acetyllysine; alternate. Lys54 is subject to N6-succinyllysine; alternate. Lys57 is modified (N6-acetyllysine).

It belongs to the ATPase protein 8 family. As to quaternary structure, component of the ATP synthase complex composed at least of ATP5F1A/subunit alpha, ATP5F1B/subunit beta, ATP5MC1/subunit c (homooctomer), MT-ATP6/subunit a, MT-ATP8/subunit 8, ATP5ME/subunit e, ATP5MF/subunit f, ATP5MG/subunit g, ATP5MK/subunit k, ATP5MJ/subunit j, ATP5F1C/subunit gamma, ATP5F1D/subunit delta, ATP5F1E/subunit epsilon, ATP5PF/subunit F6, ATP5PB/subunit b, ATP5PD/subunit d, ATP5PO/subunit OSCP. ATP synthase complex consists of a soluble F(1) head domain (subunits alpha(3) and beta(3)) - the catalytic core - and a membrane F(0) domain - the membrane proton channel (subunits c, a, 8, e, f, g, k and j). These two domains are linked by a central stalk (subunits gamma, delta, and epsilon) rotating inside the F1 region and a stationary peripheral stalk (subunits F6, b, d, and OSCP). Interacts with PRICKLE3.

Its subcellular location is the mitochondrion membrane. In terms of biological role, subunit 8, of the mitochondrial membrane ATP synthase complex (F(1)F(0) ATP synthase or Complex V) that produces ATP from ADP in the presence of a proton gradient across the membrane which is generated by electron transport complexes of the respiratory chain. ATP synthase complex consist of a soluble F(1) head domain - the catalytic core - and a membrane F(1) domain - the membrane proton channel. These two domains are linked by a central stalk rotating inside the F(1) region and a stationary peripheral stalk. During catalysis, ATP synthesis in the catalytic domain of F(1) is coupled via a rotary mechanism of the central stalk subunits to proton translocation. In vivo, can only synthesize ATP although its ATP hydrolase activity can be activated artificially in vitro. Part of the complex F(0) domain. This is ATP synthase F(0) complex subunit 8 from Talpa europaea (European mole).